The primary structure comprises 94 residues: Integration host factor subunit beta (94 aa).

This sequence belongs to the bacterial histone-like protein family. As to quaternary structure, heterodimer of an alpha and a beta chain.

Functionally, this protein is one of the two subunits of integration host factor, a specific DNA-binding protein that functions in genetic recombination as well as in transcriptional and translational control. This Aeromonas hydrophila subsp. hydrophila (strain ATCC 7966 / DSM 30187 / BCRC 13018 / CCUG 14551 / JCM 1027 / KCTC 2358 / NCIMB 9240 / NCTC 8049) protein is Integration host factor subunit beta.